The sequence spans 483 residues: Glycogen synthase (483 aa).

K15 contributes to the ADP-alpha-D-glucose binding site.

The protein belongs to the glycosyltransferase 1 family. Bacterial/plant glycogen synthase subfamily.

The enzyme catalyses [(1-&gt;4)-alpha-D-glucosyl](n) + ADP-alpha-D-glucose = [(1-&gt;4)-alpha-D-glucosyl](n+1) + ADP + H(+). It participates in glycan biosynthesis; glycogen biosynthesis. In terms of biological role, synthesizes alpha-1,4-glucan chains using ADP-glucose. This Alkalilimnicola ehrlichii (strain ATCC BAA-1101 / DSM 17681 / MLHE-1) protein is Glycogen synthase.